The sequence spans 406 residues: MFIILAAGHGKRMNSGLPKVLHKIGNFSMLQHIIYNARQLNPENISVVANLPLIERLKCLEDIQLITQESTLGTGDAVKTAVRNMKELSDSNIIVVQYGDTPLIKNSTITQMVSCLEGKALVCLGFKTSNKEYGRLIIENGSLREIVETQDDENSDEEFLANAGIMVAYAKNLRELVEKIECNGSTYEYYLTDIVSIAVKSNLNVGYVTTDEEEATGINSRNDLAKAEFYFQENRRKFFTDSGVTLVAPETVFFSLDTQIGMDSIIYPYVFFGPGVRIGPGAKIGPFTKCEDTTIGDGAIVGNFVEAKASDIGTNTKIKHLSYIGNTEVGRESNIGAGTVVCNYDGKKKHRTNIGSNCFVGANSSLIAPLNVHDESVIAAGSIIVKDVPKKRLVITRRKQMVKKIK.

The interval Met1–Arg221 is pyrophosphorylase. Residues Leu5–Gly8, Lys19, Gln68, Gly73–Thr74, Tyr98–Asp100, Gly134, Glu148, Asn162, and Asn219 contribute to the UDP-N-acetyl-alpha-D-glucosamine site. Asp100 contacts Mg(2+). Asn219 is a Mg(2+) binding site. The interval Asn222–Ser242 is linker. Residues Gly243–Lys406 are N-acetyltransferase. Residue Lys308 participates in UDP-N-acetyl-alpha-D-glucosamine binding. The active-site Proton acceptor is His320. 2 residues coordinate UDP-N-acetyl-alpha-D-glucosamine: Tyr323 and Asn334. Acetyl-CoA is bound by residues Ala337, Asn343–Tyr344, Ala380, and Arg397.

In the N-terminal section; belongs to the N-acetylglucosamine-1-phosphate uridyltransferase family. It in the C-terminal section; belongs to the transferase hexapeptide repeat family. In terms of assembly, homotrimer. It depends on Mg(2+) as a cofactor.

Its subcellular location is the cytoplasm. It carries out the reaction alpha-D-glucosamine 1-phosphate + acetyl-CoA = N-acetyl-alpha-D-glucosamine 1-phosphate + CoA + H(+). The catalysed reaction is N-acetyl-alpha-D-glucosamine 1-phosphate + UTP + H(+) = UDP-N-acetyl-alpha-D-glucosamine + diphosphate. The protein operates within nucleotide-sugar biosynthesis; UDP-N-acetyl-alpha-D-glucosamine biosynthesis; N-acetyl-alpha-D-glucosamine 1-phosphate from alpha-D-glucosamine 6-phosphate (route II): step 2/2. It participates in nucleotide-sugar biosynthesis; UDP-N-acetyl-alpha-D-glucosamine biosynthesis; UDP-N-acetyl-alpha-D-glucosamine from N-acetyl-alpha-D-glucosamine 1-phosphate: step 1/1. Its pathway is bacterial outer membrane biogenesis; LPS lipid A biosynthesis. Its function is as follows. Catalyzes the last two sequential reactions in the de novo biosynthetic pathway for UDP-N-acetylglucosamine (UDP-GlcNAc). The C-terminal domain catalyzes the transfer of acetyl group from acetyl coenzyme A to glucosamine-1-phosphate (GlcN-1-P) to produce N-acetylglucosamine-1-phosphate (GlcNAc-1-P), which is converted into UDP-GlcNAc by the transfer of uridine 5-monophosphate (from uridine 5-triphosphate), a reaction catalyzed by the N-terminal domain. The protein is Bifunctional protein GlmU of Wolbachia sp. subsp. Brugia malayi (strain TRS).